Consider the following 337-residue polypeptide: tRNA N6-adenosine threonylcarbamoyltransferase (337 aa).

Residues histidine 111 and histidine 115 each coordinate Fe cation. Substrate contacts are provided by residues 134 to 138, aspartate 167, glycine 180, and asparagine 272; that span reads LVSGG. A Fe cation-binding site is contributed by aspartate 300.

The protein belongs to the KAE1 / TsaD family. Fe(2+) is required as a cofactor.

It is found in the cytoplasm. The enzyme catalyses L-threonylcarbamoyladenylate + adenosine(37) in tRNA = N(6)-L-threonylcarbamoyladenosine(37) in tRNA + AMP + H(+). Functionally, required for the formation of a threonylcarbamoyl group on adenosine at position 37 (t(6)A37) in tRNAs that read codons beginning with adenine. Is involved in the transfer of the threonylcarbamoyl moiety of threonylcarbamoyl-AMP (TC-AMP) to the N6 group of A37, together with TsaE and TsaB. TsaD likely plays a direct catalytic role in this reaction. The chain is tRNA N6-adenosine threonylcarbamoyltransferase from Enterobacter sp. (strain 638).